A 396-amino-acid polypeptide reads, in one-letter code: S-adenosylmethionine synthase 4 (396 aa).

E13 is a Mg(2+) binding site. H19 serves as a coordination point for ATP. E47 contacts K(+). L-methionine is bound by residues E60 and Q103. ATP is bound by residues 171–173 (DGK), 239–242 (SGRF), D250, 256–257 (RK), A273, K277, and K281. D250 contacts L-methionine. K281 serves as a coordination point for L-methionine.

It belongs to the AdoMet synthase family. As to quaternary structure, homotetramer. Requires Mn(2+) as cofactor. It depends on Mg(2+) as a cofactor. Co(2+) is required as a cofactor. K(+) serves as cofactor. As to expression, expressed in roots, stems and leaves (at protein level).

It localises to the cytoplasm. It catalyses the reaction L-methionine + ATP + H2O = S-adenosyl-L-methionine + phosphate + diphosphate. It participates in amino-acid biosynthesis; S-adenosyl-L-methionine biosynthesis; S-adenosyl-L-methionine from L-methionine: step 1/1. In terms of biological role, catalyzes the formation of S-adenosylmethionine from methionine and ATP. The reaction comprises two steps that are both catalyzed by the same enzyme: formation of S-adenosylmethionine (AdoMet) and triphosphate, and subsequent hydrolysis of the triphosphate. May be involved in the synthesis of betain in response to abiotic stress such as high salinity. This is S-adenosylmethionine synthase 4 (SAMS4) from Atriplex nummularia (Old man saltbush).